Here is a 96-residue protein sequence, read N- to C-terminus: Large ribosomal subunit protein bL28 (96 aa).

The segment at 1–24 (MSRSCELTGKGVQSGHNVSHANNK) is disordered.

It belongs to the bacterial ribosomal protein bL28 family.

The polypeptide is Large ribosomal subunit protein bL28 (Sinorhizobium fredii (strain NBRC 101917 / NGR234)).